The sequence spans 262 residues: Ribosomal RNA small subunit methyltransferase A (262 aa).

S-adenosyl-L-methionine is bound by residues H11, I13, G38, E60, D85, and N105.

It belongs to the class I-like SAM-binding methyltransferase superfamily. rRNA adenine N(6)-methyltransferase family. RsmA subfamily.

Its subcellular location is the cytoplasm. The enzyme catalyses adenosine(1518)/adenosine(1519) in 16S rRNA + 4 S-adenosyl-L-methionine = N(6)-dimethyladenosine(1518)/N(6)-dimethyladenosine(1519) in 16S rRNA + 4 S-adenosyl-L-homocysteine + 4 H(+). Specifically dimethylates two adjacent adenosines (A1518 and A1519) in the loop of a conserved hairpin near the 3'-end of 16S rRNA in the 30S particle. May play a critical role in biogenesis of 30S subunits. This chain is Ribosomal RNA small subunit methyltransferase A, found in Neorickettsia sennetsu (strain ATCC VR-367 / Miyayama) (Ehrlichia sennetsu).